A 108-amino-acid chain; its full sequence is Competence protein ComGC (108 aa).

Residues 1 to 13 (MKKMMTFLKKAKV) form the signal peptide. Positions 14–39 (KAFTLVEMLVVLLIISVLFLLFVPNL) are may be involved in polymerization of ComGC. An N-methylphenylalanine modification is found at F16. Residues 16-36 (FTLVEMLVVLLIISVLFLLFV) traverse the membrane as a helical segment.

It belongs to the ComGC family. In terms of assembly, the transformation pili are flexible filaments, consisting mainly of the major pilin ComGC and smaller amounts of the minor pilins, including at least ComGD, ComGF and ComGG, and perhaps ComGE. Homodimer. Forms higher-order multimers. Interacts with ComGG; the interaction is probably direct. Post-translationally, undergoes proteolytic cleavage.

The protein localises to the cell membrane. It is found in the cell surface. Its subcellular location is the fimbrium. The protein resides in the secreted. Its function is as follows. Major component of the type IV-like pilus (T4P) that plays a role in transformation. Transformation pili are dynamically extended and retracted, perhaps thereby promoting DNA uptake and transformation. Required for transformation. Required for DNA binding. This is Competence protein ComGC from Streptococcus pneumoniae (strain ATCC BAA-255 / R6).